Here is a 268-residue protein sequence, read N- to C-terminus: NADPH-dependent 7-cyano-7-deazaguanine reductase (268 aa).

Position 79-81 (valine 79–serine 81) interacts with substrate. Serine 81–lysine 82 contributes to the NADPH binding site. Cysteine 176 functions as the Thioimide intermediate in the catalytic mechanism. Aspartate 183 acts as the Proton donor in catalysis. Residue histidine 215–glutamate 216 coordinates substrate. Position 244–245 (arginine 244–glycine 245) interacts with NADPH.

Belongs to the GTP cyclohydrolase I family. QueF type 2 subfamily. As to quaternary structure, homodimer.

It is found in the cytoplasm. The enzyme catalyses 7-aminomethyl-7-carbaguanine + 2 NADP(+) = 7-cyano-7-deazaguanine + 2 NADPH + 3 H(+). The protein operates within tRNA modification; tRNA-queuosine biosynthesis. Catalyzes the NADPH-dependent reduction of 7-cyano-7-deazaguanine (preQ0) to 7-aminomethyl-7-deazaguanine (preQ1). This chain is NADPH-dependent 7-cyano-7-deazaguanine reductase, found in Saccharophagus degradans (strain 2-40 / ATCC 43961 / DSM 17024).